A 554-amino-acid chain; its full sequence is DM7 family protein GG17593 (554 aa).

Belongs to the DM7 family.

This Drosophila erecta (Fruit fly) protein is DM7 family protein GG17593.